The chain runs to 209 residues: Large ribosomal subunit protein uL3 (209 aa).

Glutamine 150 carries the N5-methylglutamine modification.

The protein belongs to the universal ribosomal protein uL3 family. As to quaternary structure, part of the 50S ribosomal subunit. Forms a cluster with proteins L14 and L19. In terms of processing, methylated by PrmB.

Its function is as follows. One of the primary rRNA binding proteins, it binds directly near the 3'-end of the 23S rRNA, where it nucleates assembly of the 50S subunit. The chain is Large ribosomal subunit protein uL3 from Escherichia coli O139:H28 (strain E24377A / ETEC).